We begin with the raw amino-acid sequence, 92 residues long: MAHKKAGGSTRNGRDSNPKYLGVKRFGGQFVNAGEIIVRQRGTRFHPGPGVGCGRDHTLYALVEGLVQFTTKGEKNRKYVTILPEQREEAAS.

Residues 1-20 (MAHKKAGGSTRNGRDSNPKY) are disordered.

This sequence belongs to the bacterial ribosomal protein bL27 family.

This chain is Large ribosomal subunit protein bL27, found in Legionella pneumophila (strain Paris).